Reading from the N-terminus, the 602-residue chain is Elongation factor 4 (602 aa).

Positions serine 7–glutamine 189 constitute a tr-type G domain. GTP-binding positions include aspartate 19–threonine 24 and asparagine 136–aspartate 139.

It belongs to the TRAFAC class translation factor GTPase superfamily. Classic translation factor GTPase family. LepA subfamily.

The protein resides in the cell inner membrane. The enzyme catalyses GTP + H2O = GDP + phosphate + H(+). Its function is as follows. Required for accurate and efficient protein synthesis under certain stress conditions. May act as a fidelity factor of the translation reaction, by catalyzing a one-codon backward translocation of tRNAs on improperly translocated ribosomes. Back-translocation proceeds from a post-translocation (POST) complex to a pre-translocation (PRE) complex, thus giving elongation factor G a second chance to translocate the tRNAs correctly. Binds to ribosomes in a GTP-dependent manner. The protein is Elongation factor 4 of Prochlorococcus marinus (strain MIT 9312).